Here is a 631-residue protein sequence, read N- to C-terminus: Glutamyl-tRNA(Gln) amidotransferase subunit E (631 aa).

The protein belongs to the GatB/GatE family. GatE subfamily. As to quaternary structure, heterodimer of GatD and GatE.

The enzyme catalyses L-glutamyl-tRNA(Gln) + L-glutamine + ATP + H2O = L-glutaminyl-tRNA(Gln) + L-glutamate + ADP + phosphate + H(+). Allows the formation of correctly charged Gln-tRNA(Gln) through the transamidation of misacylated Glu-tRNA(Gln) in organisms which lack glutaminyl-tRNA synthetase. The reaction takes place in the presence of glutamine and ATP through an activated gamma-phospho-Glu-tRNA(Gln). The GatDE system is specific for glutamate and does not act on aspartate. This Methanococcus maripaludis (strain DSM 14266 / JCM 13030 / NBRC 101832 / S2 / LL) protein is Glutamyl-tRNA(Gln) amidotransferase subunit E.